A 334-amino-acid polypeptide reads, in one-letter code: Spermidine synthase 1 (334 aa).

Residues 1–37 (MAAPENTLHSTDSPLKRQREDEVNGVSDTLSKEPQPN) form a disordered region. The span at 26 to 37 (VSDTLSKEPQPN) shows a compositional bias: polar residues. The region spanning 44-281 (PGWFSEISPM…GMIGFMLCST (238 aa)) is the PABS domain. Gln75 contacts S-adenosyl 3-(methylsulfanyl)propylamine. Tyr105 is a binding site for putrescine. S-adenosyl 3-(methylsulfanyl)propylamine-binding positions include Gln106, Asp130, Glu150, 181-182 (DG), and Asp200. Asp200 functions as the Proton acceptor in the catalytic mechanism. Residues 200–203 (DSSD) and Tyr269 contribute to the putrescine site.

Belongs to the spermidine/spermine synthase family.

The catalysed reaction is S-adenosyl 3-(methylsulfanyl)propylamine + putrescine = S-methyl-5'-thioadenosine + spermidine + H(+). It functions in the pathway amine and polyamine biosynthesis; spermidine biosynthesis; spermidine from putrescine: step 1/1. The protein is Spermidine synthase 1 (SPDSYN1) of Pisum sativum (Garden pea).